The primary structure comprises 414 residues: Serine/threonine transporter SstT (414 aa).

At 2–15 (TTQRSPGLFRRLAH) the chain is on the cytoplasmic side. The chain crosses the membrane as a helical span at residues 16 to 36 (GSLVKQILVGLVLGILLAWIS). Topologically, residues 37–45 (KPAAEAVGL) are periplasmic. A helical membrane pass occupies residues 46–66 (LGTLFVGALKAVAPILVLMLV). At 67–83 (MASIANHQHGQKTNIRP) the chain is on the cytoplasmic side. A helical transmembrane segment spans residues 84 to 104 (ILFLYLLGTFSAALAAVVFSF). Residues 105-142 (AFPSTLHLSSSAGDISPPSGIVEVMRGLVMSMVSNPID) lie on the Periplasmic side of the membrane. A helical transmembrane segment spans residues 143 to 163 (ALLKGNYIGILVWAIGLGFAL). Residues 164 to 179 (RHGNETTKNLVNDMSN) are Cytoplasmic-facing. Residues 180 to 200 (AVTFMVKLVIRFAPIGIFGLV) traverse the membrane as a helical segment. Residues 201–217 (SSTLATTGFSTLWGYAQ) are Periplasmic-facing. A helical membrane pass occupies residues 218 to 238 (LLVVLVGCMLLVALVVNPLLV). The Cytoplasmic segment spans residues 239–299 (WWKIRRNPFP…VSIPLGATIN (61 aa)). The chain crosses the membrane as a helical span at residues 300–320 (MAGAAITITVLTLAAVNTLGI). The Periplasmic portion of the chain corresponds to 321–331 (PVDLPTALLLS). A helical transmembrane segment spans residues 332-352 (VVASLCACGASGVAGGSLLLI). At 353–414 (PLACNMFGIS…DRLANSALRN (62 aa)) the chain is on the cytoplasmic side.

It belongs to the dicarboxylate/amino acid:cation symporter (DAACS) (TC 2.A.23) family.

Its subcellular location is the cell inner membrane. The enzyme catalyses L-serine(in) + Na(+)(in) = L-serine(out) + Na(+)(out). The catalysed reaction is L-threonine(in) + Na(+)(in) = L-threonine(out) + Na(+)(out). Functionally, involved in the import of serine and threonine into the cell, with the concomitant import of sodium (symport system). The chain is Serine/threonine transporter SstT from Shigella flexneri serotype 5b (strain 8401).